The following is a 442-amino-acid chain: DDB1- and CUL4-associated factor 12-B (442 aa).

The segment covering 1–13 (MTRRPVSRKRRAT) has biased composition (basic residues). The segment at 1–31 (MTRRPVSRKRRATHGTGPGEQSDWDHSAHKR) is disordered. WD repeat units lie at residues 132 to 173 (SHQS…PVCV), 177 to 215 (GHND…VNKR), 245 to 284 (PVNC…SKLL), and 333 to 370 (EQGS…FLED).

Belongs to the WD repeat DCAF12 family. In terms of assembly, component of the DCX(DCAF12) E3 ubiquitin ligase complex, at least composed of cul4 (cul4a or cul4b), ddb1, dcaf12 and rbx1.

The protein localises to the cytoplasm. The protein resides in the cytoskeleton. It localises to the microtubule organizing center. Its subcellular location is the centrosome. It is found in the nucleus. The protein operates within protein modification; protein ubiquitination. Functionally, substrate-recognition component of a DCX (DDB1-CUL4-X-box) E3 ubiquitin-protein ligase complex of the DesCEND (destruction via C-end degrons) pathway, which recognizes a C-degron located at the extreme C terminus of target proteins, leading to their ubiquitination and degradation. The C-degron recognized by the DesCEND pathway is usually a motif of less than ten residues and can be present in full-length proteins, truncated proteins or proteolytically cleaved forms. The DCX(DCAF12) complex specifically recognizes proteins with a diglutamate (Glu-Glu) at the C-terminus leading to their ubiquitination and degradation. Also directly recognizes the C-terminal glutamate-leucine (Glu-Leu) degron as an alternative degron in proteins leading to their ubiquitination and degradation. This chain is DDB1- and CUL4-associated factor 12-B (dcaf12-b), found in Xenopus laevis (African clawed frog).